Consider the following 183-residue polypeptide: RFKKIRRLGALPGLTSKRPRSGSDLKNQLRSGKRSQYRIRLEEKQKLRFHYGLTERQLLKYVHIAGKAKGSTGQILLQLLEMRLDNILFRLGMASTIPGARQLVNHRHILVNGRIVDIPSYRCKPRDIITTNNKQRSKALIQNFIASSPRQEELPNHLTIDPFQYKGLVNQIIDSKWIGLKIN.

The S4 RNA-binding domain occupies 82 to 143 (MRLDNILFRL…KQRSKALIQN (62 aa)).

It belongs to the universal ribosomal protein uS4 family. As to quaternary structure, part of the 30S ribosomal subunit. Contacts protein S5. The interaction surface between S4 and S5 is involved in control of translational fidelity.

It is found in the plastid. It localises to the chloroplast. One of the primary rRNA binding proteins, it binds directly to 16S rRNA where it nucleates assembly of the body of the 30S subunit. In terms of biological role, with S5 and S12 plays an important role in translational accuracy. This is Small ribosomal subunit protein uS4c (rps4) from Freesia sp. (strain Lejeune 1997).